A 229-amino-acid chain; its full sequence is UPF0173 metal-dependent hydrolase SAOUHSC_01815 (229 aa).

It belongs to the UPF0173 family.

This chain is UPF0173 metal-dependent hydrolase SAOUHSC_01815, found in Staphylococcus aureus (strain NCTC 8325 / PS 47).